Here is a 79-residue protein sequence, read N- to C-terminus: Putative membrane protein insertion efficiency factor (79 aa).

Belongs to the UPF0161 family.

Its subcellular location is the cell inner membrane. Functionally, could be involved in insertion of integral membrane proteins into the membrane. This is Putative membrane protein insertion efficiency factor from Rippkaea orientalis (strain PCC 8801 / RF-1) (Cyanothece sp. (strain PCC 8801)).